The following is a 460-amino-acid chain: Anthocyanidin 3-O-glucoside 5-O-glucosyltransferase 1 (460 aa).

Positions 1–22 (MVRRRVLLATFPAQGHINPALQ) are cleaved as a signal peptide. His16 acts as the Proton acceptor in catalysis. His16 lines the an anthocyanidin pocket. The UDP-alpha-D-glucose site is built by Gln338, His353, Trp356, Asn357, Ser358, Glu361, Asp377, and Gln378.

The protein belongs to the UDP-glycosyltransferase family.

The catalysed reaction is an anthocyanidin 3-O-beta-D-glucoside + UDP-alpha-D-glucose = an anthocyanidin 3,5-di-O-beta-D-glucoside + UDP + 2 H(+). It functions in the pathway pigment biosynthesis; anthocyanin biosynthesis. In terms of biological role, catalyzes the glucosylation at the O-5 position of anthocyanidin 3-glucosides to form anthocyanidin 3,5-di-O-glucosides using UDP-glucose as sugar donor. Anthocyanidin 3,5-di-O-glucosides are molecules that are responsible for pigmentation. Also acts on anthocyanidin 3-O-(6-O-malonylglucoside). Much less active with hydroxycinnamoylglucose derivatives. No activity in the absence of the 3-O-glucoside group. In Perilla frutescens (Beefsteak mint), this protein is Anthocyanidin 3-O-glucoside 5-O-glucosyltransferase 1 (PF3R4).